Here is a 431-residue protein sequence, read N- to C-terminus: Enolase (431 aa).

Position 167 (Gln167) interacts with (2R)-2-phosphoglycerate. Glu209 acts as the Proton donor in catalysis. Positions 246, 289, and 316 each coordinate Mg(2+). Lys341, Arg370, Ser371, and Lys392 together coordinate (2R)-2-phosphoglycerate. Lys341 (proton acceptor) is an active-site residue.

The protein belongs to the enolase family. As to quaternary structure, component of the RNA degradosome, a multiprotein complex involved in RNA processing and mRNA degradation. The cofactor is Mg(2+).

It is found in the cytoplasm. It localises to the secreted. The protein resides in the cell surface. It carries out the reaction (2R)-2-phosphoglycerate = phosphoenolpyruvate + H2O. The protein operates within carbohydrate degradation; glycolysis; pyruvate from D-glyceraldehyde 3-phosphate: step 4/5. Functionally, catalyzes the reversible conversion of 2-phosphoglycerate (2-PG) into phosphoenolpyruvate (PEP). It is essential for the degradation of carbohydrates via glycolysis. The sequence is that of Enolase from Shewanella denitrificans (strain OS217 / ATCC BAA-1090 / DSM 15013).